Here is a 163-residue protein sequence, read N- to C-terminus: Nucleotide-binding protein YajQ (163 aa).

The protein belongs to the YajQ family.

Nucleotide-binding protein. In Escherichia coli (strain K12 / DH10B), this protein is Nucleotide-binding protein YajQ.